The chain runs to 304 residues: Transcription factor bHLH94 (304 aa).

The disordered stretch occupies residues 86–107 (VESHPPPQHRRKRRRTRNCKNK). Basic residues predominate over residues 92–104 (PQHRRKRRRTRNC). Positions 112 to 163 (NQRMTHIAVERNRRKQMNEYLAVLRSLMPSSYAQRGDQASIVGGAINYVKEL) constitute a bHLH domain.

In terms of assembly, homodimer. Expressed constitutively in roots, leaves, stems, and flowers.

The protein resides in the nucleus. The protein is Transcription factor bHLH94 (BHLH94) of Arabidopsis thaliana (Mouse-ear cress).